Here is a 215-residue protein sequence, read N- to C-terminus: Large ribosomal subunit protein uL4 (215 aa).

A disordered region spans residues 46–72 (TAKSKNRAEVSGGGRKPWAQKGGGRAR). Gly residues predominate over residues 56 to 71 (SGGGRKPWAQKGGGRA).

The protein belongs to the universal ribosomal protein uL4 family. As to quaternary structure, part of the 50S ribosomal subunit.

Functionally, one of the primary rRNA binding proteins, this protein initially binds near the 5'-end of the 23S rRNA. It is important during the early stages of 50S assembly. It makes multiple contacts with different domains of the 23S rRNA in the assembled 50S subunit and ribosome. In terms of biological role, forms part of the polypeptide exit tunnel. The sequence is that of Large ribosomal subunit protein uL4 from Helicobacter pylori (strain G27).